A 186-amino-acid polypeptide reads, in one-letter code: GMP synthase [glutamine-hydrolyzing] subunit A (186 aa).

Residues 2–186 form the Glutamine amidotransferase type-1 domain; that stretch reads SIVIINNFGQ…ENFNKICENY (185 aa). The Nucleophile role is filled by Cys76. Catalysis depends on residues His163 and Glu165.

In terms of assembly, heterodimer composed of a glutamine amidotransferase subunit (A) and a GMP-binding subunit (B).

The enzyme catalyses XMP + L-glutamine + ATP + H2O = GMP + L-glutamate + AMP + diphosphate + 2 H(+). It functions in the pathway purine metabolism; GMP biosynthesis; GMP from XMP (L-Gln route): step 1/1. In terms of biological role, catalyzes the synthesis of GMP from XMP. The polypeptide is GMP synthase [glutamine-hydrolyzing] subunit A (Methanosphaera stadtmanae (strain ATCC 43021 / DSM 3091 / JCM 11832 / MCB-3)).